A 111-amino-acid chain; its full sequence is Ribosome-binding factor A (111 aa).

It belongs to the RbfA family. In terms of assembly, monomer. Binds 30S ribosomal subunits, but not 50S ribosomal subunits or 70S ribosomes.

It is found in the cytoplasm. One of several proteins that assist in the late maturation steps of the functional core of the 30S ribosomal subunit. Associates with free 30S ribosomal subunits (but not with 30S subunits that are part of 70S ribosomes or polysomes). Required for efficient processing of 16S rRNA. May interact with the 5'-terminal helix region of 16S rRNA. This chain is Ribosome-binding factor A, found in Helicobacter acinonychis (strain Sheeba).